We begin with the raw amino-acid sequence, 232 residues long: Dehydrin DHN2 (232 aa).

A compositionally biased stretch (polar residues) spans 1 to 12 (MSQYQNQYGAQT). Disordered stretches follow at residues 1-92 (MSQY…STNT), 131-156 (PGTEQSRTHTDGTGYGSTGYGASGGG), and 173-232 (PGDK…CTGH). A compositionally biased stretch (gly residues) spans 73 to 82 (THTGGVGGYG). The segment covering 131–140 (PGTEQSRTHT) has biased composition (basic and acidic residues). The segment covering 143–156 (TGYGSTGYGASGGG) has biased composition (gly residues). Residues 200 to 223 (YVREEHRVDHGEKKGIMDKIKEKL) are compositionally biased toward basic and acidic residues.

This sequence belongs to the plant dehydrin family.

The sequence is that of Dehydrin DHN2 (DHN2) from Pisum sativum (Garden pea).